The chain runs to 509 residues: MGLPWYRVHTVVLNDPGRLLSVHIMHTALVAGWAGSMALYELAVFDPSDPVLDPMWRQGMFVIPFMTRLGITNSWGGWNITGGTITNPGIWSYEGVAGAHIVFSGLCFLAAIWHWVYWDLEIFCDERTGKPSLDLPKIFGIHLFLAGVGCFGFGAFHVTGLFGPGIWVSDPYGLTGRVQSVNPAWGVDGFDPFVPGGIASHHIAAGTLGILAGLFHLSVRPPQRLYKGLRMGNIETVLSSSIAAVFFAAFVVAGTMWYGSATTPIELFGPTRYQWDQGYFQQEIYRRVGAGLAENQSLSEAWSKIPEKLAFYDYIGNNPAKGGLFRAGSMDNGDGIAVGWLGHPIFRDKEGRELFVRRMPTFFETFPVVLVDGDGIVRADVPFRRAESKYSVEQVGVTVEFYGGELNGVSYSDPATVKKYARRAQLGEIFELDRATLKSDGVFRSSPRGWFTFGHVSFALLFFFGHIWHGARTLFRDVFAGIDPDLDAQVEFGAFQKLGDPSTKKPVVS.

6 helical membrane passes run 21–36 (SVHI…WAGS), 101–115 (IVFS…IWHW), 140–156 (GIHL…FGAF), 203–218 (IAAG…FHLS), 237–252 (VLSS…AFVV), and 457–472 (SFAL…HGAR).

Belongs to the PsbB/PsbC family. PsbB subfamily. As to quaternary structure, PSII is composed of 1 copy each of membrane proteins PsbA, PsbB, PsbC, PsbD, PsbE, PsbF, PsbH, PsbI, PsbJ, PsbK, PsbL, PsbM, PsbT, PsbX, PsbY, PsbZ, Psb30/Ycf12, at least 3 peripheral proteins of the oxygen-evolving complex and a large number of cofactors. It forms dimeric complexes. Binds multiple chlorophylls. PSII binds additional chlorophylls, carotenoids and specific lipids. is required as a cofactor.

It is found in the plastid. It localises to the chloroplast thylakoid membrane. In terms of biological role, one of the components of the core complex of photosystem II (PSII). It binds chlorophyll and helps catalyze the primary light-induced photochemical processes of PSII. PSII is a light-driven water:plastoquinone oxidoreductase, using light energy to abstract electrons from H(2)O, generating O(2) and a proton gradient subsequently used for ATP formation. The sequence is that of Photosystem II CP47 reaction center protein from Cicer arietinum (Chickpea).